The sequence spans 481 residues: Glutamyl-tRNA(Gln) amidotransferase subunit A (481 aa).

Catalysis depends on charge relay system residues K76 and S151. S175 (acyl-ester intermediate) is an active-site residue.

The protein belongs to the amidase family. GatA subfamily. In terms of assembly, heterotrimer of A, B and C subunits.

The enzyme catalyses L-glutamyl-tRNA(Gln) + L-glutamine + ATP + H2O = L-glutaminyl-tRNA(Gln) + L-glutamate + ADP + phosphate + H(+). Its function is as follows. Allows the formation of correctly charged Gln-tRNA(Gln) through the transamidation of misacylated Glu-tRNA(Gln) in organisms which lack glutaminyl-tRNA synthetase. The reaction takes place in the presence of glutamine and ATP through an activated gamma-phospho-Glu-tRNA(Gln). This is Glutamyl-tRNA(Gln) amidotransferase subunit A from Neisseria gonorrhoeae (strain NCCP11945).